The following is a 398-amino-acid chain: Vacuolar protease A (398 aa).

The N-terminal stretch at 1 to 18 (MKSTSLLTASVLLGSASA) is a signal peptide. Residues 19–70 (AVHKLKLNKVPLDEQLYTHNIDAHVRALGQKYMGIRPNVHQELLEENSLNDM) constitute a propeptide, activation peptide. The region spanning 85–395 (YFSEISLGTP…DLGNNAVGLA (311 aa)) is the Peptidase A1 domain. Asp103 is a catalytic residue. Cys116 and Cys121 form a disulfide bridge. A glycan (N-linked (GlcNAc...) asparagine) is linked at Asn138. Asp287 is a catalytic residue. Cys321 and Cys354 are disulfide-bonded. N-linked (GlcNAc...) asparagine glycosylation is present at Asn338.

Belongs to the peptidase A1 family.

It is found in the vacuole lumen. Its subcellular location is the secreted. The enzyme catalyses Hydrolysis of proteins with broad specificity for peptide bonds. Cleaves -Leu-Leu-|-Val-Tyr- bond in a synthetic substrate. Does not act on esters of Tyr or Arg.. Vacuolar aspartic endopeptidase which is probably also secreted and contributes to virulence. This Aspergillus fumigatus (strain ATCC MYA-4609 / CBS 101355 / FGSC A1100 / Af293) (Neosartorya fumigata) protein is Vacuolar protease A (pep2).